Here is a 485-residue protein sequence, read N- to C-terminus: Cysteine--tRNA ligase (485 aa).

Residue cysteine 27 coordinates Zn(2+). The 'HIGH' region motif lies at 29-39 (ITAYDLCHIGH). The Zn(2+) site is built by cysteine 208, histidine 233, and glutamate 237. The short motif at 265 to 269 (KMSKS) is the 'KMSKS' region element. Lysine 268 serves as a coordination point for ATP.

The protein belongs to the class-I aminoacyl-tRNA synthetase family. In terms of assembly, monomer. The cofactor is Zn(2+).

It is found in the cytoplasm. The catalysed reaction is tRNA(Cys) + L-cysteine + ATP = L-cysteinyl-tRNA(Cys) + AMP + diphosphate. The sequence is that of Cysteine--tRNA ligase from Nitratidesulfovibrio vulgaris (strain DSM 19637 / Miyazaki F) (Desulfovibrio vulgaris).